The following is a 487-amino-acid chain: Betaine aldehyde dehydrogenase (487 aa).

Ile27 and Asp93 together coordinate K(+). Residue 149–151 participates in NAD(+) binding; the sequence is GAW. The Charge relay system role is filled by Lys161. Residues 175–178 and 228–231 each bind NAD(+); these read KPSE and SVPT. Leu243 contributes to the K(+) binding site. Glu249 (proton acceptor) is an active-site residue. Residues Gly251, Cys283, and Glu384 each contribute to the NAD(+) site. Cys283 (nucleophile) is an active-site residue. Residue Cys283 is modified to Cysteine sulfenic acid (-SOH). 2 residues coordinate K(+): Lys454 and Gly457. Glu461 acts as the Charge relay system in catalysis.

The protein belongs to the aldehyde dehydrogenase family. Dimer of dimers. The cofactor is K(+).

It catalyses the reaction betaine aldehyde + NAD(+) + H2O = glycine betaine + NADH + 2 H(+). The protein operates within amine and polyamine biosynthesis; betaine biosynthesis via choline pathway; betaine from betaine aldehyde: step 1/1. Involved in the biosynthesis of the osmoprotectant glycine betaine. Catalyzes the irreversible oxidation of betaine aldehyde to the corresponding acid. This Brucella anthropi (strain ATCC 49188 / DSM 6882 / CCUG 24695 / JCM 21032 / LMG 3331 / NBRC 15819 / NCTC 12168 / Alc 37) (Ochrobactrum anthropi) protein is Betaine aldehyde dehydrogenase.